The sequence spans 612 residues: Rhotekin-2 (612 aa).

The region spanning 3-79 (IKRKKIRESA…LRSQMGESNT (77 aa)) is the REM-1 domain. One can recognise a PH domain in the interval 285 to 392 (DEAMMGFLNQ…WMEAFWQHFY (108 aa)). Disordered stretches follow at residues 483-530 (RNKP…SDKE) and 574-612 (ENKAELDTGTQEPIKPVPTPRQKSLREKLDPRVWLQSQV). Residues 486–498 (PPLLSSDDPSTSS) are compositionally biased toward low complexity.

The chain is Rhotekin-2 (rtkn2) from Xenopus laevis (African clawed frog).